A 447-amino-acid chain; its full sequence is MQEDKYLTVSALTNYIKRKFDADPYLHRVYLVGEISNFRLRTNSHQYFSLKDENAKISAIMFKSAFAKVKFQPEEGMRVIVSGRISLYPGNGSYQIYVDSMQPDGVGALYQAYEQLKIKLSQEGLFEAPKLPIPKYPRKIAIVTSPSGAVIRDIITTVSRRYPIVQLVLFPALVQGNEAANSIAAQIKMINTLDDFDTIIIGRGGGSIEDLWPFNEEVVARAIFASKLPVISSVGHETDTTIADLVADMRAATPTAAAELATPVLTDILEELQKLQLQTIVAFRNILKMRSQQVQHLQQSYIFQEPQRLYEGYVQNVDILTEKLISLEKQQITTAEGSFKTLNSRLLANTPASRIKMAKQNVEHLRQMTNNNITNRFSKYANDLNSLIGSLDTLSPLKIMSRGYTYVTRDTKVVKSIEDLSIDDKIQLNFSDGSANAVIKTINSEDK.

The protein belongs to the XseA family. Heterooligomer composed of large and small subunits.

The protein resides in the cytoplasm. The catalysed reaction is Exonucleolytic cleavage in either 5'- to 3'- or 3'- to 5'-direction to yield nucleoside 5'-phosphates.. Bidirectionally degrades single-stranded DNA into large acid-insoluble oligonucleotides, which are then degraded further into small acid-soluble oligonucleotides. This chain is Exodeoxyribonuclease 7 large subunit, found in Pediococcus pentosaceus (strain ATCC 25745 / CCUG 21536 / LMG 10740 / 183-1w).